The primary structure comprises 429 residues: Citrate synthase (429 aa).

Residues histidine 306 and aspartate 364 contribute to the active site.

This sequence belongs to the citrate synthase family.

The catalysed reaction is oxaloacetate + acetyl-CoA + H2O = citrate + CoA + H(+). It functions in the pathway carbohydrate metabolism; tricarboxylic acid cycle; isocitrate from oxaloacetate: step 1/2. This chain is Citrate synthase (gltA), found in Rhizobium meliloti (strain 1021) (Ensifer meliloti).